Here is a 260-residue protein sequence, read N- to C-terminus: Ribonuclease HII (260 aa).

The region spanning 71-259 (RRIAGIDEAG…VREVLKASEQ (189 aa)) is the RNase H type-2 domain. A divalent metal cation contacts are provided by D77, E78, and D169.

Belongs to the RNase HII family. Requires Mn(2+) as cofactor. Mg(2+) serves as cofactor.

The protein localises to the cytoplasm. It catalyses the reaction Endonucleolytic cleavage to 5'-phosphomonoester.. Functionally, endonuclease that specifically degrades the RNA of RNA-DNA hybrids. This Geobacillus kaustophilus (strain HTA426) protein is Ribonuclease HII.